The following is a 350-amino-acid chain: Probable transposase-like protein At4g04430 (350 aa).

2 disordered regions span residues 1–57 (MPSD…PSVN) and 307–328 (QIGQ…QVAN). A compositionally biased stretch (low complexity) spans 30-43 (SGVQGSGSRSGSTV).

This sequence belongs to the transposase 24 family.

In Arabidopsis thaliana (Mouse-ear cress), this protein is Probable transposase-like protein At4g04430.